We begin with the raw amino-acid sequence, 354 residues long: S-adenosylmethionine:tRNA ribosyltransferase-isomerase (354 aa).

Belongs to the QueA family. Monomer.

The protein localises to the cytoplasm. The catalysed reaction is 7-aminomethyl-7-carbaguanosine(34) in tRNA + S-adenosyl-L-methionine = epoxyqueuosine(34) in tRNA + adenine + L-methionine + 2 H(+). It functions in the pathway tRNA modification; tRNA-queuosine biosynthesis. In terms of biological role, transfers and isomerizes the ribose moiety from AdoMet to the 7-aminomethyl group of 7-deazaguanine (preQ1-tRNA) to give epoxyqueuosine (oQ-tRNA). The sequence is that of S-adenosylmethionine:tRNA ribosyltransferase-isomerase from Salmonella newport (strain SL254).